We begin with the raw amino-acid sequence, 140 residues long: uncharacterized protein (140 aa).

Belongs to the MG439/MG440 family.

This is an uncharacterized protein from Mycoplasma pneumoniae (strain ATCC 29342 / M129 / Subtype 1) (Mycoplasmoides pneumoniae).